A 201-amino-acid polypeptide reads, in one-letter code: Orotate phosphoribosyltransferase (201 aa).

E113 to S121 is a binding site for 5-phospho-alpha-D-ribose 1-diphosphate. Orotate-binding residues include T117 and R145.

It belongs to the purine/pyrimidine phosphoribosyltransferase family. PyrE subfamily. In terms of assembly, homodimer. Requires Mg(2+) as cofactor.

The enzyme catalyses orotidine 5'-phosphate + diphosphate = orotate + 5-phospho-alpha-D-ribose 1-diphosphate. It functions in the pathway pyrimidine metabolism; UMP biosynthesis via de novo pathway; UMP from orotate: step 1/2. Catalyzes the transfer of a ribosyl phosphate group from 5-phosphoribose 1-diphosphate to orotate, leading to the formation of orotidine monophosphate (OMP). In Helicobacter acinonychis (strain Sheeba), this protein is Orotate phosphoribosyltransferase.